A 237-amino-acid chain; its full sequence is UPF0758 protein Veis_1654 (237 aa).

In terms of domain architecture, MPN spans 115–237 (VFDTPDAVKH…ALSMAEMGLL (123 aa)). Zn(2+) is bound by residues His186, His188, and Asp199. Positions 186 to 199 (HNHPSGSVQPSRAD) match the JAMM motif motif.

Belongs to the UPF0758 family.

The sequence is that of UPF0758 protein Veis_1654 from Verminephrobacter eiseniae (strain EF01-2).